Reading from the N-terminus, the 355-residue chain is MAAHADEPVFAARRYNEETTRESAFVYTNANNTRDPFEGPNYHIAPRWVYNLASLWMIIVVIASIFTNSLVIVATAKFKKLRHPLNWILVNLAIADLGETVLASTISVFNQVFGYFVLGHPMCIFEGWTVSVCGITALWSLTIISWERWVVVCKPFGNVKFDGKWAAGGIIFAWTWAIIWCTPPIFGWSRYWPHGLKTSCGPDVFSGSEDPGVASYMVTLLLTCCILPLSVIIICYIFVWNAIHQVAQQQKDSESTQKAEKEVSRMVVVMILAFILCWGPYASFATFSALNPGYAWHPLAAALPAYFAKSATIYNPIIYVFMNRQFRSCIMQLFGKKVEDASEVSGSTTEVSTAS.

Residues 1–49 (MAAHADEPVFAARRYNEETTRESAFVYTNANNTRDPFEGPNYHIAPRWV) lie on the Extracellular side of the membrane. The N-linked (GlcNAc...) asparagine glycan is linked to Asn-31. A helical transmembrane segment spans residues 50 to 74 (YNLASLWMIIVVIASIFTNSLVIVA). Residues 75-86 (TAKFKKLRHPLN) are Cytoplasmic-facing. A helical transmembrane segment spans residues 87–112 (WILVNLAIADLGETVLASTISVFNQV). The Extracellular portion of the chain corresponds to 113–126 (FGYFVLGHPMCIFE). Cysteines 123 and 200 form a disulfide. The chain crosses the membrane as a helical span at residues 127 to 146 (GWTVSVCGITALWSLTIISW). Residues 147-165 (ERWVVVCKPFGNVKFDGKW) lie on the Cytoplasmic side of the membrane. A helical membrane pass occupies residues 166–189 (AAGGIIFAWTWAIIWCTPPIFGWS). Residues 190–215 (RYWPHGLKTSCGPDVFSGSEDPGVAS) lie on the Extracellular side of the membrane. The helical transmembrane segment at 216-243 (YMVTLLLTCCILPLSVIIICYIFVWNAI) threads the bilayer. Residues 244-265 (HQVAQQQKDSESTQKAEKEVSR) are Cytoplasmic-facing. Residues 266–289 (MVVVMILAFILCWGPYASFATFSA) form a helical membrane-spanning segment. The Extracellular segment spans residues 290 to 297 (LNPGYAWH). A helical transmembrane segment spans residues 298–322 (PLAAALPAYFAKSATIYNPIIYVFM). Lys-309 bears the N6-(retinylidene)lysine mark. Residues 323–355 (NRQFRSCIMQLFGKKVEDASEVSGSTTEVSTAS) lie on the Cytoplasmic side of the membrane.

It belongs to the G-protein coupled receptor 1 family. Opsin subfamily. As to expression, the color pigments are found in the cone photoreceptor cells.

It is found in the membrane. In terms of biological role, visual pigments are the light-absorbing molecules that mediate vision. They consist of an apoprotein, opsin, covalently linked to cis-retinal. The sequence is that of Green-sensitive opsin-1 (G103) from Psalidodon fasciatus (Banded astyanax).